The following is a 262-amino-acid chain: Acyl-[acyl-carrier-protein]--UDP-N-acetylglucosamine O-acyltransferase (262 aa).

This sequence belongs to the transferase hexapeptide repeat family. LpxA subfamily. In terms of assembly, homotrimer.

The protein resides in the cytoplasm. The enzyme catalyses a (3R)-hydroxyacyl-[ACP] + UDP-N-acetyl-alpha-D-glucosamine = a UDP-3-O-[(3R)-3-hydroxyacyl]-N-acetyl-alpha-D-glucosamine + holo-[ACP]. It participates in glycolipid biosynthesis; lipid IV(A) biosynthesis; lipid IV(A) from (3R)-3-hydroxytetradecanoyl-[acyl-carrier-protein] and UDP-N-acetyl-alpha-D-glucosamine: step 1/6. Functionally, involved in the biosynthesis of lipid A, a phosphorylated glycolipid that anchors the lipopolysaccharide to the outer membrane of the cell. This is Acyl-[acyl-carrier-protein]--UDP-N-acetylglucosamine O-acyltransferase from Shigella flexneri serotype 5b (strain 8401).